A 320-amino-acid polypeptide reads, in one-letter code: Tabersonine synthase (320 aa).

An Involved in the stabilization of the negatively charged intermediate by the formation of the oxyanion hole motif is present at residues 78-80 (HGA). Gly81 contributes to the (-)-tabersonine binding site. Ser170 acts as the Proton acceptor in catalysis. Residue Asp266 is part of the active site. Residue Tyr297 participates in (-)-tabersonine binding. The active-site Proton donor/acceptor is the Tyr297.

This sequence belongs to the 'GDXG' lipolytic enzyme family. Interacts with dehydroprecondylocarpine acetate synthase (DPAS). Expressed in leaf epidermis.

The protein resides in the cytoplasm. The protein localises to the cytosol. Its subcellular location is the nucleus. The catalysed reaction is dehydrosecodine = (-)-tabersonine. It catalyses the reaction dihydroprecondylocarpine acetate = (-)-tabersonine + acetate + H(+). It participates in alkaloid biosynthesis. Component of iboga and aspidosperma monoterpenoid indole alkaloids (MIAs, e.g. tabersonine and catharanthine) biosynthesis pathway from 19E-geissoschizine, psychoactive compounds likely to be used in the treatment of opioid dependence. Catalyzes the conversion of dehydrosecodine to tabersonine, a precursor of vindoline; this process starts with the conversion of dihydroprecondylocarpine acetate to dehydrosecodine. The polypeptide is Tabersonine synthase (Catharanthus roseus (Madagascar periwinkle)).